The primary structure comprises 459 residues: Bifunctional protein GlmU (459 aa).

The tract at residues 1–229 (MSNYAIILAA…FDESLGVNDR (229 aa)) is pyrophosphorylase. UDP-N-acetyl-alpha-D-glucosamine-binding positions include 8–11 (LAAG), Lys-22, Gln-72, and 77–78 (GT). Asp-102 serves as a coordination point for Mg(2+). 4 residues coordinate UDP-N-acetyl-alpha-D-glucosamine: Gly-139, Glu-154, Asn-169, and Asn-227. Asn-227 is a Mg(2+) binding site. Residues 230 to 250 (VALATAEKVMRHRIARQHMVN) are linker. The N-acetyltransferase stretch occupies residues 251 to 459 (GVTVVNPDSA…NKKPHHPSQK (209 aa)). UDP-N-acetyl-alpha-D-glucosamine-binding residues include Arg-332 and Lys-350. The active-site Proton acceptor is the His-362. UDP-N-acetyl-alpha-D-glucosamine contacts are provided by Tyr-365 and Asn-376. Acetyl-CoA-binding positions include Ala-379, 385–386 (NY), Ser-404, Ala-422, and Arg-439.

This sequence in the N-terminal section; belongs to the N-acetylglucosamine-1-phosphate uridyltransferase family. The protein in the C-terminal section; belongs to the transferase hexapeptide repeat family. In terms of assembly, homotrimer. Mg(2+) is required as a cofactor.

The protein localises to the cytoplasm. It catalyses the reaction alpha-D-glucosamine 1-phosphate + acetyl-CoA = N-acetyl-alpha-D-glucosamine 1-phosphate + CoA + H(+). It carries out the reaction N-acetyl-alpha-D-glucosamine 1-phosphate + UTP + H(+) = UDP-N-acetyl-alpha-D-glucosamine + diphosphate. Its pathway is nucleotide-sugar biosynthesis; UDP-N-acetyl-alpha-D-glucosamine biosynthesis; N-acetyl-alpha-D-glucosamine 1-phosphate from alpha-D-glucosamine 6-phosphate (route II): step 2/2. It functions in the pathway nucleotide-sugar biosynthesis; UDP-N-acetyl-alpha-D-glucosamine biosynthesis; UDP-N-acetyl-alpha-D-glucosamine from N-acetyl-alpha-D-glucosamine 1-phosphate: step 1/1. The protein operates within bacterial outer membrane biogenesis; LPS lipid A biosynthesis. Its function is as follows. Catalyzes the last two sequential reactions in the de novo biosynthetic pathway for UDP-N-acetylglucosamine (UDP-GlcNAc). The C-terminal domain catalyzes the transfer of acetyl group from acetyl coenzyme A to glucosamine-1-phosphate (GlcN-1-P) to produce N-acetylglucosamine-1-phosphate (GlcNAc-1-P), which is converted into UDP-GlcNAc by the transfer of uridine 5-monophosphate (from uridine 5-triphosphate), a reaction catalyzed by the N-terminal domain. The polypeptide is Bifunctional protein GlmU (Streptococcus agalactiae serotype V (strain ATCC BAA-611 / 2603 V/R)).